A 275-amino-acid chain; its full sequence is Rhamnulose-1-phosphate aldolase (275 aa).

Glu117 is an active-site residue. The Zn(2+) site is built by His141, His143, and His212.

Belongs to the aldolase class II family. RhaD subfamily. As to quaternary structure, homotetramer. Zn(2+) serves as cofactor.

It localises to the cytoplasm. The enzyme catalyses L-rhamnulose 1-phosphate = (S)-lactaldehyde + dihydroxyacetone phosphate. The protein operates within carbohydrate degradation; L-rhamnose degradation; glycerone phosphate from L-rhamnose: step 3/3. Its function is as follows. Catalyzes the reversible cleavage of L-rhamnulose-1-phosphate to dihydroxyacetone phosphate (DHAP) and L-lactaldehyde. The sequence is that of Rhamnulose-1-phosphate aldolase from Salmonella choleraesuis (strain SC-B67).